A 329-amino-acid chain; its full sequence is Malate dehydrogenase (329 aa).

12–18 provides a ligand contact to NAD(+); sequence GAAGQIG. Residues Arg-95 and Arg-101 each coordinate substrate. Residues Asn-108, Gln-115, and 132-134 contribute to the NAD(+) site; that span reads VGN. Substrate is bound by residues Asn-134 and Arg-165. The active-site Proton acceptor is His-190.

The protein belongs to the LDH/MDH superfamily. MDH type 2 family.

The enzyme catalyses (S)-malate + NAD(+) = oxaloacetate + NADH + H(+). Its function is as follows. Catalyzes the reversible oxidation of malate to oxaloacetate. The protein is Malate dehydrogenase of Bordetella avium (strain 197N).